The chain runs to 520 residues: Amine oxidase [flavin-containing] B (520 aa).

N-acetylserine is present on serine 2. Topologically, residues 2–489 (SNKCDVVVVG…TFLERHLPSV (488 aa)) are cytoplasmic. The residue at position 52 (lysine 52) is an N6-acetyllysine. Cysteine 397 carries the post-translational modification S-8alpha-FAD cysteine. Residues 490-516 (PGLLRLIGLTTIFSATALGFLAHKRGL) form a helical; Anchor for type IV membrane protein membrane-spanning segment. The Mitochondrial intermembrane portion of the chain corresponds to 517–520 (LVRV).

In terms of assembly, monomer, homo- or heterodimer (containing two subunits of similar size). Each subunit contains a covalently bound flavin. Enzymatically active as monomer. FAD serves as cofactor.

It is found in the mitochondrion outer membrane. It carries out the reaction a secondary aliphatic amine + O2 + H2O = a primary amine + an aldehyde + H2O2. It catalyses the reaction (R)-adrenaline + O2 + H2O = (R)-3,4-dihydroxymandelaldehyde + methylamine + H2O2. The catalysed reaction is a primary methyl amine + O2 + H2O = an aldehyde + H2O2 + NH4(+). The enzyme catalyses benzylamine + O2 + H2O = benzaldehyde + H2O2 + NH4(+). It carries out the reaction dopamine + O2 + H2O = 3,4-dihydroxyphenylacetaldehyde + H2O2 + NH4(+). It catalyses the reaction tyramine + O2 + H2O = (4-hydroxyphenyl)acetaldehyde + H2O2 + NH4(+). The catalysed reaction is (R)-noradrenaline + O2 + H2O = (R)-3,4-dihydroxymandelaldehyde + H2O2 + NH4(+). The enzyme catalyses 2-phenylethylamine + O2 + H2O = 2-phenylacetaldehyde + H2O2 + NH4(+). It carries out the reaction N-acetylputrescine + O2 + H2O = 4-acetamidobutanal + H2O2 + NH4(+). With respect to regulation, inhibited by deprenyl. Its function is as follows. Catalyzes the oxidative deamination of primary and some secondary amines such as neurotransmitters, and exogenous amines including the tertiary amine, neurotoxin 1-methyl-4-phenyl-1,2,3,6-tetrahydropyridine (MPTP), with concomitant reduction of oxygen to hydrogen peroxide and participates in the metabolism of neuroactive and vasoactive amines in the central nervous system and peripheral tissues. Preferentially degrades benzylamine and phenylethylamine. In Homo sapiens (Human), this protein is Amine oxidase [flavin-containing] B.